Consider the following 289-residue polypeptide: Serine/threonine-protein phosphatase Pgam5, mitochondrial (289 aa).

A helical membrane pass occupies residues 7–23 (FVCGTGAGLAAYYLQRL).

It belongs to the phosphoglycerate mutase family. BPG-dependent PGAM subfamily. As to quaternary structure, interacts with Pk92B/ASK1.

The protein localises to the mitochondrion outer membrane. It catalyses the reaction O-phospho-L-seryl-[protein] + H2O = L-seryl-[protein] + phosphate. It carries out the reaction O-phospho-L-threonyl-[protein] + H2O = L-threonyl-[protein] + phosphate. Its function is as follows. Displays phosphatase activity for serine/threonine residues, and dephosphorylates and activates Pk92B kinase. Has apparently no phosphoglycerate mutase activity. This chain is Serine/threonine-protein phosphatase Pgam5, mitochondrial (Pgam5), found in Drosophila melanogaster (Fruit fly).